The primary structure comprises 199 residues: dITP/XTP pyrophosphatase (199 aa).

7-12 serves as a coordination point for substrate; that stretch reads SANKGK. Aspartate 38 and aspartate 73 together coordinate Mg(2+). Aspartate 73 functions as the Proton acceptor in the catalytic mechanism. Substrate contacts are provided by residues serine 74, 155 to 158, lysine 178, and 183 to 184; these read FGYD and HR.

The protein belongs to the HAM1 NTPase family. As to quaternary structure, homodimer. Requires Mg(2+) as cofactor.

The enzyme catalyses XTP + H2O = XMP + diphosphate + H(+). It catalyses the reaction dITP + H2O = dIMP + diphosphate + H(+). The catalysed reaction is ITP + H2O = IMP + diphosphate + H(+). Pyrophosphatase that catalyzes the hydrolysis of nucleoside triphosphates to their monophosphate derivatives, with a high preference for the non-canonical purine nucleotides XTP (xanthosine triphosphate), dITP (deoxyinosine triphosphate) and ITP. Seems to function as a house-cleaning enzyme that removes non-canonical purine nucleotides from the nucleotide pool, thus preventing their incorporation into DNA/RNA and avoiding chromosomal lesions. This Aliarcobacter butzleri (strain RM4018) (Arcobacter butzleri) protein is dITP/XTP pyrophosphatase.